We begin with the raw amino-acid sequence, 307 residues long: MIQSHVPVMLNEMLEALSPKDGESYLDCTFGAGGYSKAILESCNCYVTALDRDPNVIKRAEEIQQNYGERFDFVETNFADSFAKLKEKKFDGIVLDLGVSSMQLDIADRGFSFLHDGPLDMRMSGQGLSAEEFVNTAEEKELADVIYKYGDESFSRRIAKRIVEYRKTARIDSTGKLAEIVRSSIGFRKGKIDPATKTFQAIRIYVNDELGELEQFLVNVKNILKKDGRLVVVSFHSLEDRIVKNFFKENSEKPVVRSKYAKDDMTIDPNKWLKIITNKALASSDKEVGLNIRARSAKLRAAKAIYE.

S-adenosyl-L-methionine contacts are provided by residues G33–Y35, D51, F82, D96, and Q103.

The protein belongs to the methyltransferase superfamily. RsmH family.

It is found in the cytoplasm. The enzyme catalyses cytidine(1402) in 16S rRNA + S-adenosyl-L-methionine = N(4)-methylcytidine(1402) in 16S rRNA + S-adenosyl-L-homocysteine + H(+). In terms of biological role, specifically methylates the N4 position of cytidine in position 1402 (C1402) of 16S rRNA. In Rickettsia massiliae (strain Mtu5), this protein is Ribosomal RNA small subunit methyltransferase H.